Reading from the N-terminus, the 123-residue chain is MPTVNQLIRKPRTAPVKRNKVPALQANPQKRGVCTRVYTTTPKKPNSALRKVAKVRLTNGFEVIGYIPGEGHNLQEHSVVMIRGGRVKDLPGVRYHIIRGVLDTQGVKNRKQRRSKYGAKRPK.

3-methylthioaspartic acid is present on aspartate 89.

The protein belongs to the universal ribosomal protein uS12 family. In terms of assembly, part of the 30S ribosomal subunit. Contacts proteins S8 and S17. May interact with IF1 in the 30S initiation complex.

In terms of biological role, with S4 and S5 plays an important role in translational accuracy. Interacts with and stabilizes bases of the 16S rRNA that are involved in tRNA selection in the A site and with the mRNA backbone. Located at the interface of the 30S and 50S subunits, it traverses the body of the 30S subunit contacting proteins on the other side and probably holding the rRNA structure together. The combined cluster of proteins S8, S12 and S17 appears to hold together the shoulder and platform of the 30S subunit. The sequence is that of Small ribosomal subunit protein uS12 from Brucella abortus (strain S19).